A 327-amino-acid chain; its full sequence is Tryptophan--tRNA ligase (327 aa).

ATP-binding positions include 9–11 (RPT) and 17–18 (GN). A 'HIGH' region motif is present at residues 10 to 18 (PTGNLHLGN). D133 contacts L-tryptophan. ATP contacts are provided by residues 145 to 147 (GKD), V186, and 194 to 198 (KMGKS). A 'KMSKS' region motif is present at residues 194-198 (KMGKS).

This sequence belongs to the class-I aminoacyl-tRNA synthetase family. Homodimer.

The protein localises to the cytoplasm. The enzyme catalyses tRNA(Trp) + L-tryptophan + ATP = L-tryptophyl-tRNA(Trp) + AMP + diphosphate + H(+). In terms of biological role, catalyzes the attachment of tryptophan to tRNA(Trp). The sequence is that of Tryptophan--tRNA ligase from Porphyromonas gingivalis (strain ATCC BAA-308 / W83).